Here is a 205-residue protein sequence, read N- to C-terminus: Large ribosomal subunit protein uL4 (205 aa).

Positions Arg44 to Ser79 are disordered.

The protein belongs to the universal ribosomal protein uL4 family. As to quaternary structure, part of the 50S ribosomal subunit.

Its function is as follows. One of the primary rRNA binding proteins, this protein initially binds near the 5'-end of the 23S rRNA. It is important during the early stages of 50S assembly. It makes multiple contacts with different domains of the 23S rRNA in the assembled 50S subunit and ribosome. Forms part of the polypeptide exit tunnel. In Coxiella burnetii (strain Dugway 5J108-111), this protein is Large ribosomal subunit protein uL4.